Reading from the N-terminus, the 196-residue chain is Putative NADH dehydrogenase/NAD(P)H nitroreductase Rpal_4764 (196 aa).

The protein belongs to the nitroreductase family. HadB/RutE subfamily. FMN is required as a cofactor.

This Rhodopseudomonas palustris (strain TIE-1) protein is Putative NADH dehydrogenase/NAD(P)H nitroreductase Rpal_4764.